The sequence spans 160 residues: uncharacterized protein (160 aa).

Residues 20–152 (EREIWVLYMK…VYEGLSILSR (133 aa)) enclose the HTH marR-type domain. Residues 66–89 (VSDIAEKMGASLSNTTGLLDRLEK) constitute a DNA-binding region (H-T-H motif).

This is an uncharacterized protein from Bacillus subtilis (strain 168).